The following is a 435-amino-acid chain: 3-ketoacyl-CoA thiolase (435 aa).

C98 serves as the catalytic Acyl-thioester intermediate. Active-site proton acceptor residues include H391 and C421.

It belongs to the thiolase-like superfamily. Thiolase family. Heterotetramer of two alpha chains (FadJ) and two beta chains (FadI).

It localises to the cytoplasm. It catalyses the reaction an acyl-CoA + acetyl-CoA = a 3-oxoacyl-CoA + CoA. The protein operates within lipid metabolism; fatty acid beta-oxidation. Functionally, catalyzes the final step of fatty acid oxidation in which acetyl-CoA is released and the CoA ester of a fatty acid two carbons shorter is formed. This is 3-ketoacyl-CoA thiolase from Vibrio cholerae serotype O1 (strain ATCC 39541 / Classical Ogawa 395 / O395).